The sequence spans 229 residues: Cytidylate kinase (229 aa).

Position 12–20 (12–20 (GPSGSGKGT)) interacts with ATP.

Belongs to the cytidylate kinase family. Type 1 subfamily.

Its subcellular location is the cytoplasm. The catalysed reaction is CMP + ATP = CDP + ADP. It carries out the reaction dCMP + ATP = dCDP + ADP. The chain is Cytidylate kinase from Pseudomonas syringae pv. tomato (strain ATCC BAA-871 / DC3000).